The primary structure comprises 147 residues: D-aminoacyl-tRNA deacylase (147 aa).

The short motif at 137–138 (GP) is the Gly-cisPro motif, important for rejection of L-amino acids element.

This sequence belongs to the DTD family. Homodimer.

Its subcellular location is the cytoplasm. The enzyme catalyses glycyl-tRNA(Ala) + H2O = tRNA(Ala) + glycine + H(+). The catalysed reaction is a D-aminoacyl-tRNA + H2O = a tRNA + a D-alpha-amino acid + H(+). In terms of biological role, an aminoacyl-tRNA editing enzyme that deacylates mischarged D-aminoacyl-tRNAs. Also deacylates mischarged glycyl-tRNA(Ala), protecting cells against glycine mischarging by AlaRS. Acts via tRNA-based rather than protein-based catalysis; rejects L-amino acids rather than detecting D-amino acids in the active site. By recycling D-aminoacyl-tRNA to D-amino acids and free tRNA molecules, this enzyme counteracts the toxicity associated with the formation of D-aminoacyl-tRNA entities in vivo and helps enforce protein L-homochirality. This chain is D-aminoacyl-tRNA deacylase, found in Bacillus licheniformis (strain ATCC 14580 / DSM 13 / JCM 2505 / CCUG 7422 / NBRC 12200 / NCIMB 9375 / NCTC 10341 / NRRL NRS-1264 / Gibson 46).